A 119-amino-acid polypeptide reads, in one-letter code: Large ribosomal subunit protein uL22 (119 aa).

The protein belongs to the universal ribosomal protein uL22 family. Part of the 50S ribosomal subunit.

Functionally, this protein binds specifically to 23S rRNA; its binding is stimulated by other ribosomal proteins, e.g. L4, L17, and L20. It is important during the early stages of 50S assembly. It makes multiple contacts with different domains of the 23S rRNA in the assembled 50S subunit and ribosome. The globular domain of the protein is located near the polypeptide exit tunnel on the outside of the subunit, while an extended beta-hairpin is found that lines the wall of the exit tunnel in the center of the 70S ribosome. This Bifidobacterium adolescentis (strain ATCC 15703 / DSM 20083 / NCTC 11814 / E194a) protein is Large ribosomal subunit protein uL22.